The following is a 133-amino-acid chain: Ribonuclease P protein component (133 aa).

It belongs to the RnpA family. In terms of assembly, consists of a catalytic RNA component (M1 or rnpB) and a protein subunit.

The enzyme catalyses Endonucleolytic cleavage of RNA, removing 5'-extranucleotides from tRNA precursor.. In terms of biological role, RNaseP catalyzes the removal of the 5'-leader sequence from pre-tRNA to produce the mature 5'-terminus. It can also cleave other RNA substrates such as 4.5S RNA. The protein component plays an auxiliary but essential role in vivo by binding to the 5'-leader sequence and broadening the substrate specificity of the ribozyme. This Paramagnetospirillum magneticum (strain ATCC 700264 / AMB-1) (Magnetospirillum magneticum) protein is Ribonuclease P protein component.